Reading from the N-terminus, the 311-residue chain is MKREELLVEEIKDLTLEELKGYADFYKILDKVYGFTAESVVRGVKILKDMIKEADLRFLSFTANLVSTGLRGLFADLIKQGYFNVIITTGGTIDHDIARSFGGKYYKGLFEYDDSMLRELEIHRLGNILVPMESYGKVIEDVVRKYMNEIVSIKKEWPVYELLWEFGKRISDENSILKAAYEKKVPIIVPGIIDGSFGTNLFIYSQFTQLKLNLFEDMKLIKDLIFSCKKSGALIIGGGISKHHTIWWNQFKDGLDYAIYITTAQEYDGSLSGAKPREAISWNKIKPTSENVVIYGDATIILPILSASLLG.

The active-site Nucleophile is Lys284.

Belongs to the deoxyhypusine synthase family. NAD(+) is required as a cofactor.

It catalyses the reaction [eIF5A protein]-L-lysine + spermidine = [eIF5A protein]-deoxyhypusine + propane-1,3-diamine. The protein operates within protein modification; eIF5A hypusination. Its function is as follows. Catalyzes the NAD-dependent oxidative cleavage of spermidine and the subsequent transfer of the butylamine moiety of spermidine to the epsilon-amino group of a specific lysine residue of the eIF-5A precursor protein to form the intermediate deoxyhypusine residue. This Sulfurisphaera tokodaii (strain DSM 16993 / JCM 10545 / NBRC 100140 / 7) (Sulfolobus tokodaii) protein is Probable deoxyhypusine synthase (dys).